Reading from the N-terminus, the 94-residue chain is Lipoate-protein ligase A subunit 2 (94 aa).

In terms of assembly, heterodimer composed of LplA and LplB.

It catalyses the reaction L-lysyl-[lipoyl-carrier protein] + (R)-lipoate + ATP = N(6)-[(R)-lipoyl]-L-lysyl-[lipoyl-carrier protein] + AMP + diphosphate + H(+). Its pathway is protein modification; protein lipoylation via exogenous pathway; protein N(6)-(lipoyl)lysine from lipoate: step 1/2. It participates in protein modification; protein lipoylation via exogenous pathway; protein N(6)-(lipoyl)lysine from lipoate: step 2/2. Part of a lipoate-protein ligase complex that catalyzes both the ATP-dependent activation of exogenously supplied lipoate to lipoyl-AMP and the transfer of the activated lipoyl onto the lipoyl domains of lipoate-dependent enzymes. Can also use octanoate as substrate. The chain is Lipoate-protein ligase A subunit 2 (lplB) from Thermoplasma acidophilum (strain ATCC 25905 / DSM 1728 / JCM 9062 / NBRC 15155 / AMRC-C165).